The primary structure comprises 78 residues: Mitotic-spindle organizing protein 1 (78 aa).

A2 is modified (N-acetylalanine).

It belongs to the MOZART1 family. In terms of assembly, associates with the gamma-tubulin ring complex (gTuRC) consisting of TUBGCP2, TUBGCP3, TUBGCP4, TUBGCP5 and TUBGCP6 and gamma-tubulin TUBG1 or TUBG2; within the complex, interacts with TUBGCP3 and TUBGCP6 to form a luminal bridge with actin that stabilizes the initial structure during complex assembly. Interacts with TUBG1.

The protein localises to the cytoplasm. It is found in the cytoskeleton. The protein resides in the microtubule organizing center. Its subcellular location is the centrosome. It localises to the spindle. Functionally, required for the recruitment and the assembly of the gamma-tubulin ring complex (gTuRC) at the centrosome. The gTuRC regulates the minus-end nucleation of alpha-beta tubulin heterodimers that grow into microtubule protafilaments, a critical step in centrosome duplication and spindle formation. This chain is Mitotic-spindle organizing protein 1 (Mzt1), found in Mus musculus (Mouse).